The primary structure comprises 403 residues: Phosphomevalonate dehydratase large subunit (403 aa).

Positions 48, 49, 50, 79, and 80 each coordinate (R)-5-phosphomevalonate. A [4Fe-4S] cluster-binding site is contributed by Cys-119. (R)-5-phosphomevalonate-binding residues include Glu-138 and Ser-139. 2 residues coordinate [4Fe-4S] cluster: Cys-301 and Cys-358. Position 378 (Lys-378) interacts with (R)-5-phosphomevalonate.

The protein belongs to the AcnX type II large subunit family. In terms of assembly, heterodimer composed of a large subunit (PMDh-L) and a small subunit (PMDh-S). [4Fe-4S] cluster serves as cofactor.

It carries out the reaction (R)-5-phosphomevalonate = (2E)-3-methyl-5-phosphooxypent-2-enoate + H2O. It functions in the pathway isoprenoid biosynthesis; isopentenyl diphosphate biosynthesis via mevalonate pathway. Component of a hydro-lyase that catalyzes the dehydration of mevalonate 5-phosphate (MVA5P) to form trans-anhydromevalonate 5-phosphate (tAHMP). Involved in the archaeal mevalonate (MVA) pathway, which provides fundamental precursors for isoprenoid biosynthesis, such as isopentenyl diphosphate (IPP) and dimethylallyl diphosphate (DMAPP). The polypeptide is Phosphomevalonate dehydratase large subunit (Methanocaldococcus jannaschii (strain ATCC 43067 / DSM 2661 / JAL-1 / JCM 10045 / NBRC 100440) (Methanococcus jannaschii)).